Reading from the N-terminus, the 138-residue chain is ATP synthase epsilon chain (138 aa).

This sequence belongs to the ATPase epsilon chain family. F-type ATPases have 2 components, CF(1) - the catalytic core - and CF(0) - the membrane proton channel. CF(1) has five subunits: alpha(3), beta(3), gamma(1), delta(1), epsilon(1). CF(0) has three main subunits: a, b and c.

The protein resides in the cell membrane. Functionally, produces ATP from ADP in the presence of a proton gradient across the membrane. In Streptococcus mutans serotype c (strain ATCC 700610 / UA159), this protein is ATP synthase epsilon chain (atpC).